Here is a 210-residue protein sequence, read N- to C-terminus: Cytochrome c biogenesis ATP-binding export protein CcmA (210 aa).

Residues leucine 4 to glutamate 207 enclose the ABC transporter domain. Position 36-43 (glycine 36–threonine 43) interacts with ATP.

Belongs to the ABC transporter superfamily. CcmA exporter (TC 3.A.1.107) family. As to quaternary structure, the complex is composed of two ATP-binding proteins (CcmA) and two transmembrane proteins (CcmB).

It is found in the cell inner membrane. The enzyme catalyses heme b(in) + ATP + H2O = heme b(out) + ADP + phosphate + H(+). Functionally, part of the ABC transporter complex CcmAB involved in the biogenesis of c-type cytochromes; once thought to export heme, this seems not to be the case, but its exact role is uncertain. Responsible for energy coupling to the transport system. This chain is Cytochrome c biogenesis ATP-binding export protein CcmA, found in Paracoccus denitrificans (strain Pd 1222).